Here is a 415-residue protein sequence, read N- to C-terminus: Diaminopimelate decarboxylase (415 aa).

Residue Lys54 is modified to N6-(pyridoxal phosphate)lysine. Pyridoxal 5'-phosphate contacts are provided by residues Gly223 and Glu264–Arg267. Substrate is bound by residues Arg267, Arg303, and Tyr307. Residue Cys338 is the Proton donor of the active site. Glu339 and Tyr374 together coordinate substrate. Tyr374 lines the pyridoxal 5'-phosphate pocket.

It belongs to the Orn/Lys/Arg decarboxylase class-II family. LysA subfamily. In terms of assembly, homodimer. Pyridoxal 5'-phosphate serves as cofactor.

It carries out the reaction meso-2,6-diaminopimelate + H(+) = L-lysine + CO2. It functions in the pathway amino-acid biosynthesis; L-lysine biosynthesis via DAP pathway; L-lysine from DL-2,6-diaminopimelate: step 1/1. In terms of biological role, specifically catalyzes the decarboxylation of meso-diaminopimelate (meso-DAP) to L-lysine. In Buchnera aphidicola subsp. Acyrthosiphon pisum (strain APS) (Acyrthosiphon pisum symbiotic bacterium), this protein is Diaminopimelate decarboxylase.